A 340-amino-acid chain; its full sequence is Phenylalanine--tRNA ligase alpha subunit (340 aa).

E254 lines the Mg(2+) pocket.

Belongs to the class-II aminoacyl-tRNA synthetase family. Phe-tRNA synthetase alpha subunit type 1 subfamily. In terms of assembly, tetramer of two alpha and two beta subunits. The cofactor is Mg(2+).

It localises to the cytoplasm. It carries out the reaction tRNA(Phe) + L-phenylalanine + ATP = L-phenylalanyl-tRNA(Phe) + AMP + diphosphate + H(+). This is Phenylalanine--tRNA ligase alpha subunit from Caldicellulosiruptor saccharolyticus (strain ATCC 43494 / DSM 8903 / Tp8T 6331).